Consider the following 125-residue polypeptide: Large ribosomal subunit protein eL31 (125 aa).

N-acetylmethionine is present on M1. At S15 the chain carries Phosphoserine. An N6-succinyllysine mark is found at K55 and K70. The residue at position 75 (K75) is an N6-acetyllysine; alternate. The residue at position 75 (K75) is an N6-succinyllysine; alternate. S98 is modified (phosphoserine).

It belongs to the eukaryotic ribosomal protein eL31 family. In terms of assembly, component of the large ribosomal subunit.

It localises to the cytoplasm. Component of the large ribosomal subunit. The ribosome is a large ribonucleoprotein complex responsible for the synthesis of proteins in the cell. This Pongo abelii (Sumatran orangutan) protein is Large ribosomal subunit protein eL31 (RPL31).